A 517-amino-acid chain; its full sequence is Bifunctional purine biosynthesis protein PurH (517 aa).

The 145-residue stretch at 1-145 (MSPLALVSVS…KNHKYVSVLV (145 aa)) folds into the MGS-like domain.

The protein belongs to the PurH family.

The enzyme catalyses (6R)-10-formyltetrahydrofolate + 5-amino-1-(5-phospho-beta-D-ribosyl)imidazole-4-carboxamide = 5-formamido-1-(5-phospho-D-ribosyl)imidazole-4-carboxamide + (6S)-5,6,7,8-tetrahydrofolate. The catalysed reaction is IMP + H2O = 5-formamido-1-(5-phospho-D-ribosyl)imidazole-4-carboxamide. The protein operates within purine metabolism; IMP biosynthesis via de novo pathway; 5-formamido-1-(5-phospho-D-ribosyl)imidazole-4-carboxamide from 5-amino-1-(5-phospho-D-ribosyl)imidazole-4-carboxamide (10-formyl THF route): step 1/1. It participates in purine metabolism; IMP biosynthesis via de novo pathway; IMP from 5-formamido-1-(5-phospho-D-ribosyl)imidazole-4-carboxamide: step 1/1. The polypeptide is Bifunctional purine biosynthesis protein PurH (Prochlorococcus marinus (strain MIT 9215)).